Consider the following 303-residue polypeptide: Probable WRKY transcription factor 30 (303 aa).

The tract at residues 65–92 (DQVSQGGGSPKSDDSDQEPLVIKSSKKS) is disordered. The WRKY DNA-binding region spans 107–175 (GVDRTLDDGF…YRGIHSCSQA (69 aa)). A compositionally biased stretch (low complexity) spans 266 to 278 (SGSASHSASNSPS). Residues 266-291 (SGSASHSASNSPSTVPLESPFESYDP) form a disordered region.

The protein belongs to the WRKY group III family. Interacts with WRKY53, WRKY54 and WRKY70.

It is found in the nucleus. Functionally, transcription factor. Interacts specifically with the W box (5'-(T)TGAC[CT]-3'), a frequently occurring elicitor-responsive cis-acting element. In Arabidopsis thaliana (Mouse-ear cress), this protein is Probable WRKY transcription factor 30.